A 95-amino-acid polypeptide reads, in one-letter code: Large ribosomal subunit protein uL23 (95 aa).

It belongs to the universal ribosomal protein uL23 family. Part of the 50S ribosomal subunit. Contacts protein L29, and trigger factor when it is bound to the ribosome.

Functionally, one of the early assembly proteins it binds 23S rRNA. One of the proteins that surrounds the polypeptide exit tunnel on the outside of the ribosome. Forms the main docking site for trigger factor binding to the ribosome. The chain is Large ribosomal subunit protein uL23 from Anoxybacillus flavithermus (strain DSM 21510 / WK1).